Here is a 149-residue protein sequence, read N- to C-terminus: Transcriptional repressor NrdR (149 aa).

A zinc finger lies at 3 to 34; sequence CPFCSATDTKVIDSRLVSDGHQVRRRRQCLAC. An ATP-cone domain is found at 49–139; sequence PKVIKSNGNR…VYRSFEDIKE (91 aa).

Belongs to the NrdR family. Requires Zn(2+) as cofactor.

Functionally, negatively regulates transcription of bacterial ribonucleotide reductase nrd genes and operons by binding to NrdR-boxes. In Aliivibrio fischeri (strain ATCC 700601 / ES114) (Vibrio fischeri), this protein is Transcriptional repressor NrdR.